We begin with the raw amino-acid sequence, 235 residues long: MRFDPPLEEGRLLRRYKRFLADIESAGGERLTIHCPNTGSMLNCMSEGCRVWFSRSDDPRRKLPGTWELSETPQGRLACVNTARANRLVEEALLAGDIPELAGFASLRREVAYGVENSRADFRLEYPAGALFIEVKSVTLGFDETAVAAFPDAVTLRGAKHLRELAALARDGVRAVQLYCVNLSGIEAVRPADEIDPAYGKALREAAQAGVEVLAYGAEVTTEGLRLARRLPVRL.

This sequence belongs to the SfsA family.

The sequence is that of Sugar fermentation stimulation protein homolog from Pseudomonas paraeruginosa (strain DSM 24068 / PA7) (Pseudomonas aeruginosa (strain PA7)).